Consider the following 154-residue polypeptide: Transcriptional repressor NrdR (154 aa).

A disordered region spans residues 1 to 22 (MRCPFCAHDDSQVKDSRPTDDG). The segment at 3-34 (CPFCAHDDSQVKDSRPTDDGAAIRRRRQCEGC) is a zinc-finger region. Residues 7–22 (AHDDSQVKDSRPTDDG) show a composition bias toward basic and acidic residues. The ATP-cone domain occupies 49–139 (MTVVKSDGRR…VYKDFREAKD (91 aa)).

This sequence belongs to the NrdR family. Zn(2+) is required as a cofactor.

Negatively regulates transcription of bacterial ribonucleotide reductase nrd genes and operons by binding to NrdR-boxes. In Rhizorhabdus wittichii (strain DSM 6014 / CCUG 31198 / JCM 15750 / NBRC 105917 / EY 4224 / RW1) (Sphingomonas wittichii), this protein is Transcriptional repressor NrdR.